Reading from the N-terminus, the 580-residue chain is 2-succinyl-5-enolpyruvyl-6-hydroxy-3-cyclohexene-1-carboxylate synthase (580 aa).

This sequence belongs to the TPP enzyme family. MenD subfamily. In terms of assembly, homodimer. Mg(2+) is required as a cofactor. It depends on Mn(2+) as a cofactor. Requires thiamine diphosphate as cofactor.

It catalyses the reaction isochorismate + 2-oxoglutarate + H(+) = 5-enolpyruvoyl-6-hydroxy-2-succinyl-cyclohex-3-ene-1-carboxylate + CO2. The protein operates within quinol/quinone metabolism; 1,4-dihydroxy-2-naphthoate biosynthesis; 1,4-dihydroxy-2-naphthoate from chorismate: step 2/7. It participates in quinol/quinone metabolism; menaquinone biosynthesis. Functionally, catalyzes the thiamine diphosphate-dependent decarboxylation of 2-oxoglutarate and the subsequent addition of the resulting succinic semialdehyde-thiamine pyrophosphate anion to isochorismate to yield 2-succinyl-5-enolpyruvyl-6-hydroxy-3-cyclohexene-1-carboxylate (SEPHCHC). This Listeria welshimeri serovar 6b (strain ATCC 35897 / DSM 20650 / CCUG 15529 / CIP 8149 / NCTC 11857 / SLCC 5334 / V8) protein is 2-succinyl-5-enolpyruvyl-6-hydroxy-3-cyclohexene-1-carboxylate synthase.